The primary structure comprises 132 residues: Binder of sperm protein homolog 1 (132 aa).

Positions 1-17 (MGSLMLLFVETTRNSSA) are cleaved as a signal peptide. Fibronectin type-II domains lie at 40–84 (VTDG…FCSA) and 85–132 (EDFA…KYCE). Cystine bridges form between cysteine 45–cysteine 69, cysteine 59–cysteine 82, cysteine 90–cysteine 116, and cysteine 104–cysteine 131. An N-linked (GlcNAc...) asparagine glycan is attached at asparagine 53.

This sequence belongs to the seminal plasma protein family. Expressed only in the epididymis.

Its subcellular location is the secreted. Binds sperm in vitro and promotes sperm capacitation. Specifically promotes capacitation induced by high density lipoproteins (HDLs). Also binds heparin, phospholipid liposomes, and weakly to gelatin. Does not bind chondroitin sulfate B. The protein is Binder of sperm protein homolog 1 (BSPH1) of Homo sapiens (Human).